We begin with the raw amino-acid sequence, 154 residues long: NADPH-dependent 7-cyano-7-deazaguanine reductase (154 aa).

C52 serves as the catalytic Thioimide intermediate. D59 functions as the Proton donor in the catalytic mechanism. Substrate contacts are provided by residues 74-76 (VES) and 93-94 (HE).

Belongs to the GTP cyclohydrolase I family. QueF type 1 subfamily.

The protein localises to the cytoplasm. The catalysed reaction is 7-aminomethyl-7-carbaguanine + 2 NADP(+) = 7-cyano-7-deazaguanine + 2 NADPH + 3 H(+). It functions in the pathway tRNA modification; tRNA-queuosine biosynthesis. Catalyzes the NADPH-dependent reduction of 7-cyano-7-deazaguanine (preQ0) to 7-aminomethyl-7-deazaguanine (preQ1). This is NADPH-dependent 7-cyano-7-deazaguanine reductase from Ruegeria sp. (strain TM1040) (Silicibacter sp.).